The chain runs to 234 residues: Sperm-associated microtubule inner protein 5 (234 aa).

In terms of assembly, microtubule inner protein component of sperm flagellar doublet microtubules. Expressed in testis (at protein level). Strongly expressed in peritubular cells and Leydig cells and weakly expressed in the cytoplasm of spermatocytes.

The protein localises to the cytoplasm. Its subcellular location is the cytoskeleton. The protein resides in the flagellum axoneme. It localises to the nucleus. Its function is as follows. Microtubule inner protein (MIP) part of the dynein-decorated doublet microtubules (DMTs) in flagellum axoneme. May serve to reinforce and thus stabilize the microtubule structure in the sperm flagella. The polypeptide is Sperm-associated microtubule inner protein 5 (Homo sapiens (Human)).